The following is a 210-amino-acid chain: dTTP/UTP pyrophosphatase (210 aa).

The active-site Proton acceptor is aspartate 85.

The protein belongs to the Maf family. YhdE subfamily. It depends on a divalent metal cation as a cofactor.

The protein localises to the cytoplasm. The enzyme catalyses dTTP + H2O = dTMP + diphosphate + H(+). The catalysed reaction is UTP + H2O = UMP + diphosphate + H(+). Its function is as follows. Nucleoside triphosphate pyrophosphatase that hydrolyzes dTTP and UTP. May have a dual role in cell division arrest and in preventing the incorporation of modified nucleotides into cellular nucleic acids. The polypeptide is dTTP/UTP pyrophosphatase (Saccharophagus degradans (strain 2-40 / ATCC 43961 / DSM 17024)).